The primary structure comprises 252 residues: Hydroxyacylglutathione hydrolase (252 aa).

Residues His54, His56, Asp58, His59, His111, Asp130, and His170 each contribute to the Zn(2+) site.

The protein belongs to the metallo-beta-lactamase superfamily. Glyoxalase II family. In terms of assembly, monomer. Zn(2+) is required as a cofactor.

The catalysed reaction is an S-(2-hydroxyacyl)glutathione + H2O = a 2-hydroxy carboxylate + glutathione + H(+). The protein operates within secondary metabolite metabolism; methylglyoxal degradation; (R)-lactate from methylglyoxal: step 2/2. Functionally, thiolesterase that catalyzes the hydrolysis of S-D-lactoyl-glutathione to form glutathione and D-lactic acid. The protein is Hydroxyacylglutathione hydrolase of Francisella tularensis subsp. tularensis (strain FSC 198).